Here is a 459-residue protein sequence, read N- to C-terminus: MNPPTNPRACSPLARAGSFAPIHVVGGGLAGTEAAWQIAQAGLPVILSEMRPVRQSPAHHTDQLGELVCSNSFGAAASDRAAGLLKEELRQLGSLVIATADCHAVPAGGALAVDRARFSQALTEAIQNHPRITLRREEVTEIPEGIAVLCTGPLTSDPLAKALQAFTGLEYLSFFDASSPIVTGDSLNRAVVFQASRYDKGEAAYLNCPMTEAEYERFWRALVEAEQAPLKDFEREERKFFEGCLPIEEMARRGKDTLCFGPLKPVGLVDPRTGSRPYAVVQLRQEDKAGQLWNLVGFQTNLKWGEQQRVFRLIPGLEQAEFVRFGVMHRNTFLNSPQLLWPTLQFRRRPTLFAAGQLVGTEGYACAVAGGWLAGQNAARLALGLPLITLPPETMMGSLFQFISSADPRHFQPMPANFGLLPDLEGRKLRNKQERYGRYRDRALAALKTTGLVRQVQTA.

Position 26–31 (26–31 (GGGLAG)) interacts with FAD.

It belongs to the MnmG family. TrmFO subfamily. The cofactor is FAD.

The protein resides in the cytoplasm. The enzyme catalyses uridine(54) in tRNA + (6R)-5,10-methylene-5,6,7,8-tetrahydrofolate + NADH + H(+) = 5-methyluridine(54) in tRNA + (6S)-5,6,7,8-tetrahydrofolate + NAD(+). It catalyses the reaction uridine(54) in tRNA + (6R)-5,10-methylene-5,6,7,8-tetrahydrofolate + NADPH + H(+) = 5-methyluridine(54) in tRNA + (6S)-5,6,7,8-tetrahydrofolate + NADP(+). In terms of biological role, catalyzes the folate-dependent formation of 5-methyl-uridine at position 54 (M-5-U54) in all tRNAs. The chain is Methylenetetrahydrofolate--tRNA-(uracil-5-)-methyltransferase TrmFO from Synechococcus sp. (strain JA-2-3B'a(2-13)) (Cyanobacteria bacterium Yellowstone B-Prime).